The sequence spans 120 residues: Large ribosomal subunit protein eL8 (120 aa).

The protein belongs to the eukaryotic ribosomal protein eL8 family. Part of the 50S ribosomal subunit. Probably part of the RNase P complex.

The protein resides in the cytoplasm. Its function is as follows. Multifunctional RNA-binding protein that recognizes the K-turn motif in ribosomal RNA, the RNA component of RNase P, box H/ACA, box C/D and box C'/D' sRNAs. This is Large ribosomal subunit protein eL8 from Halorubrum lacusprofundi (strain ATCC 49239 / DSM 5036 / JCM 8891 / ACAM 34).